The chain runs to 344 residues: 4-dimethylallyltryptophan N-methyltransferase easF (344 aa).

Belongs to the methyltransferase superfamily. In terms of assembly, homodimer.

It catalyses the reaction 4-(3-methylbut-2-enyl)-L-tryptophan + S-adenosyl-L-methionine = 4-(3-methylbut-2-enyl)-L-abrine + S-adenosyl-L-homocysteine + H(+). It participates in alkaloid biosynthesis; ergot alkaloid biosynthesis. 4-dimethylallyltryptophan N-methyltransferase; part of the gene cluster that mediates the biosynthesis of fungal ergot alkaloid ergovaline, the predominant ergopeptine product in E.festucae var. lolii. DmaW catalyzes the first step of ergot alkaloid biosynthesis by condensing dimethylallyl diphosphate (DMAP) and tryptophan to form 4-dimethylallyl-L-tryptophan. The second step is catalyzed by the methyltransferase easF that methylates 4-dimethylallyl-L-tryptophan in the presence of S-adenosyl-L-methionine, resulting in the formation of 4-dimethylallyl-L-abrine. The catalase easC and the FAD-dependent oxidoreductase easE then transform 4-dimethylallyl-L-abrine to chanoclavine-I which is further oxidized by easD in the presence of NAD(+), resulting in the formation of chanoclavine-I aldehyde. Agroclavine dehydrogenase easG then mediates the conversion of chanoclavine-I aldehyde to agroclavine via a non-enzymatic adduct reaction: the substrate is an iminium intermediate that is formed spontaneously from chanoclavine-I aldehyde in the presence of glutathione. The presence of easA is not required to complete this reaction. Further conversion of agroclavine to paspalic acid is a two-step process involving oxidation of agroclavine to elymoclavine and of elymoclavine to paspalic acid, the second step being performed by the elymoclavine oxidase cloA. Paspalic acid is then further converted to D-lysergic acid. Ergovaline is assembled from D-lysergic acid and three different amino acids by the D-lysergyl-peptide-synthetase composed of a monomudular (lpsB) and a trimodular (lpsA) nonribosomal peptide synthetase subunit. This is 4-dimethylallyltryptophan N-methyltransferase easF from Epichloe festucae var. lolii (Neotyphodium lolii).